We begin with the raw amino-acid sequence, 563 residues long: Group II intron-interrupted relaxase LtrB (563 aa).

The active site involves Tyr-44. Mg(2+)-binding residues include His-159 and His-161.

This sequence belongs to the mobilization (MOB) protein type 1 family. Mg(2+) is required as a cofactor. It depends on Mn(2+) as a cofactor.

In terms of biological role, mediates initiation of conjugal transfer possibly by introducing a single-stranded nick at the potential origin of transfer. The sequence is that of Group II intron-interrupted relaxase LtrB (ltrBE1) from Lactococcus lactis subsp. cremoris (strain MG1363).